The chain runs to 352 residues: MTFTLAELASRVGGEVVGDGALVVEGVAPLEDAGPHDVSFFSNRKYRKAFEASRAGVVVVEPDAEIPAGRTVLRARNAYLAFAKISTLFHPPQEPLPEIAPEAVIHPSARVHPSAQVMPLASIGPDAVIGARTIVHPGVHVCEGARVGEDCLLYPNVVIRERCVVGNRVILQPGCVIGSDGFGFAFDPDGEGHGPRHFKVPQAGIAVVEDDVEIGANACIDRATLGATRVGRGTKIDNLVQLGHNVELGPLCLIVAQVGIAGSTKLGMGVVAAGQVGIIGHLNIGDGVKMGAQSGIAGDVAAGDTVSGTPAQPHADWLRSQAALRQLPDLRREVKELRRELDRLRAGKEGKP.

Histidine 244 (proton acceptor) is an active-site residue.

Belongs to the transferase hexapeptide repeat family. LpxD subfamily. In terms of assembly, homotrimer.

The enzyme catalyses a UDP-3-O-[(3R)-3-hydroxyacyl]-alpha-D-glucosamine + a (3R)-hydroxyacyl-[ACP] = a UDP-2-N,3-O-bis[(3R)-3-hydroxyacyl]-alpha-D-glucosamine + holo-[ACP] + H(+). The protein operates within bacterial outer membrane biogenesis; LPS lipid A biosynthesis. Functionally, catalyzes the N-acylation of UDP-3-O-acylglucosamine using 3-hydroxyacyl-ACP as the acyl donor. Is involved in the biosynthesis of lipid A, a phosphorylated glycolipid that anchors the lipopolysaccharide to the outer membrane of the cell. In Anaeromyxobacter sp. (strain Fw109-5), this protein is UDP-3-O-acylglucosamine N-acyltransferase.